The following is a 426-amino-acid chain: Dihydroorotase (426 aa).

Positions 58 and 60 each coordinate Zn(2+). Substrate contacts are provided by residues 60–62 and asparagine 92; that span reads HLR. Positions 150, 177, and 230 each coordinate Zn(2+). Asparagine 276 is a binding site for substrate. Aspartate 303 is a Zn(2+) binding site. Aspartate 303 is an active-site residue. Position 307 (histidine 307) interacts with substrate.

Belongs to the metallo-dependent hydrolases superfamily. DHOase family. Class I DHOase subfamily. Zn(2+) is required as a cofactor.

The catalysed reaction is (S)-dihydroorotate + H2O = N-carbamoyl-L-aspartate + H(+). It functions in the pathway pyrimidine metabolism; UMP biosynthesis via de novo pathway; (S)-dihydroorotate from bicarbonate: step 3/3. Its function is as follows. Catalyzes the reversible cyclization of carbamoyl aspartate to dihydroorotate. The sequence is that of Dihydroorotase from Acetivibrio thermocellus (strain ATCC 27405 / DSM 1237 / JCM 9322 / NBRC 103400 / NCIMB 10682 / NRRL B-4536 / VPI 7372) (Clostridium thermocellum).